A 510-amino-acid polypeptide reads, in one-letter code: NAD(P)H-quinone oxidoreductase subunit 2 A, chloroplastic (510 aa).

A run of 14 helical transmembrane segments spans residues 31 to 51 (FIFP…IDLT), 59 to 79 (WFYF…LFRW), 99 to 119 (IFQF…VEYI), 124 to 144 (MAIT…MFLC), 149 to 169 (LITI…LSGY), 184 to 204 (LLMG…LYGL), 229 to 249 (ISIA…LAPF), 261 to 281 (PTPV…ALAT), 295 to 315 (WHLL…LLAI), 323 to 343 (MLAY…IVGD), 354 to 374 (YMLF…LFGL), 395 to 415 (ALSL…AGFF), 418 to 438 (LYLF…IGLL), and 484 to 504 (MTVC…ILAI).

Belongs to the complex I subunit 2 family. NDH is composed of at least 16 different subunits, 5 of which are encoded in the nucleus.

Its subcellular location is the plastid. It is found in the chloroplast thylakoid membrane. The enzyme catalyses a plastoquinone + NADH + (n+1) H(+)(in) = a plastoquinol + NAD(+) + n H(+)(out). The catalysed reaction is a plastoquinone + NADPH + (n+1) H(+)(in) = a plastoquinol + NADP(+) + n H(+)(out). Its function is as follows. NDH shuttles electrons from NAD(P)H:plastoquinone, via FMN and iron-sulfur (Fe-S) centers, to quinones in the photosynthetic chain and possibly in a chloroplast respiratory chain. The immediate electron acceptor for the enzyme in this species is believed to be plastoquinone. Couples the redox reaction to proton translocation, and thus conserves the redox energy in a proton gradient. This chain is NAD(P)H-quinone oxidoreductase subunit 2 A, chloroplastic, found in Saccharum hybrid (Sugarcane).